A 406-amino-acid chain; its full sequence is Flavohemoprotein (406 aa).

The 139-residue stretch at 6 to 144 (VLLDKKTTEI…IADIFISVEK (139 aa)) folds into the Globin domain. Position 91 (His91) interacts with heme b. Catalysis depends on charge relay system residues Tyr101 and Glu143. Residues 155–406 (GGWTGFRDFK…LFGPLEPIAK (252 aa)) are reductase. One can recognise an FAD-binding FR-type domain in the interval 158 to 267 (TGFRDFKVIK…SAPAGDFILD (110 aa)). Residues Tyr196 and 212–215 (RQYS) each bind FAD. Residue 280–285 (GVGLTP) participates in NADP(+) binding. 397-400 (LFGP) lines the FAD pocket.

It belongs to the globin family. Two-domain flavohemoproteins subfamily. This sequence in the C-terminal section; belongs to the flavoprotein pyridine nucleotide cytochrome reductase family. Heme b serves as cofactor. The cofactor is FAD.

The enzyme catalyses 2 nitric oxide + NADPH + 2 O2 = 2 nitrate + NADP(+) + H(+). It catalyses the reaction 2 nitric oxide + NADH + 2 O2 = 2 nitrate + NAD(+) + H(+). Functionally, is involved in NO detoxification in an aerobic process, termed nitric oxide dioxygenase (NOD) reaction that utilizes O(2) and NAD(P)H to convert NO to nitrate, which protects the bacterium from various noxious nitrogen compounds. Therefore, plays a central role in the inducible response to nitrosative stress. The protein is Flavohemoprotein of Oceanobacillus iheyensis (strain DSM 14371 / CIP 107618 / JCM 11309 / KCTC 3954 / HTE831).